We begin with the raw amino-acid sequence, 300 residues long: Inositol polyphosphate multikinase beta (300 aa).

Residue Ser-78 is modified to Phosphoserine.

It belongs to the inositol phosphokinase (IPK) family. As to quaternary structure, interacts with KIN10 and KIN11. Phosphorylated by KIN10. As to expression, expressed in leaves, stems, roots, siliques and flowers. Detected in vascular strands, stigma cells, the abscission zones of fully elongated siliques, the root central cylinder and the root tip.

Its subcellular location is the nucleus. It catalyses the reaction 1D-myo-inositol 1,4,5-trisphosphate + 2 ATP = 1D-myo-inositol 1,3,4,5,6-pentakisphosphate + 2 ADP + 2 H(+). The catalysed reaction is 1D-myo-inositol 1,3,4,6-tetrakisphosphate + ATP = 1D-myo-inositol 1,3,4,5,6-pentakisphosphate + ADP + H(+). With respect to regulation, down-regulated by KIN10 through its protein phosphorylation. Inositol phosphate kinase with a broad substrate specificity. Phosphorylates inositol 1,4,5-trisphosphate (Ins(1,4,5)P3), inositol 1,4,5,6-tetrakisphosphate (Ins(1,4,5,6)P4), inositol 1,3,4,5-tetrakisphosphate (Ins(1,3,4,5)P4), inositol 1,3,4,6-tetrakisphosphate (Ins(1,3,4,6)P4) and inositol 1,2,3,4,6-pentakisphosphate (Ins(1,2,3,4,6)P5) but not inositol 1,4-bisphosphate (Ins(1,4)P2), inositol 1,3,4-trisphosphate (Ins(1,3,4)P3), inositol 1,2,6-trisphosphate (Ins(1,2,6)P3), inositol 3,4,5,6-tetrakisphosphate (Ins(3,4,5,6)P4), inositol 1,3,4,5,6-pentakisphosphate (Ins(1,3,4,5,6)P5), inositol 1,2,4,5,6-pentakisphosphate (Ins(1,2,4,5,6)P5) or inositol hexakisphosphate (InsP6). Involved in the auxin signaling pathway. Regulates axillary shoot branching and is required for phytate synthesis in seeds. The sequence is that of Inositol polyphosphate multikinase beta (IPK2b) from Arabidopsis thaliana (Mouse-ear cress).